A 255-amino-acid polypeptide reads, in one-letter code: UDP-2,3-diacylglucosamine hydrolase (255 aa).

The Mn(2+) site is built by aspartate 8, histidine 10, aspartate 41, asparagine 79, and histidine 114. Residue 79-80 coordinates substrate; it reads NR. Substrate is bound by residues aspartate 122, serine 160, asparagine 164, lysine 167, and histidine 195. 2 residues coordinate Mn(2+): histidine 195 and histidine 197.

It belongs to the LpxH family. It depends on Mn(2+) as a cofactor.

Its subcellular location is the cell inner membrane. The enzyme catalyses UDP-2-N,3-O-bis[(3R)-3-hydroxytetradecanoyl]-alpha-D-glucosamine + H2O = 2-N,3-O-bis[(3R)-3-hydroxytetradecanoyl]-alpha-D-glucosaminyl 1-phosphate + UMP + 2 H(+). It functions in the pathway glycolipid biosynthesis; lipid IV(A) biosynthesis; lipid IV(A) from (3R)-3-hydroxytetradecanoyl-[acyl-carrier-protein] and UDP-N-acetyl-alpha-D-glucosamine: step 4/6. Hydrolyzes the pyrophosphate bond of UDP-2,3-diacylglucosamine to yield 2,3-diacylglucosamine 1-phosphate (lipid X) and UMP by catalyzing the attack of water at the alpha-P atom. Involved in the biosynthesis of lipid A, a phosphorylated glycolipid that anchors the lipopolysaccharide to the outer membrane of the cell. The polypeptide is UDP-2,3-diacylglucosamine hydrolase (Hamiltonella defensa subsp. Acyrthosiphon pisum (strain 5AT)).